Consider the following 256-residue polypeptide: uncharacterized protein (256 aa).

An N-terminal signal peptide occupies residues 1–22 (MGYLKRIGMCISLLIVIIFVTS). C23 carries the N-palmitoyl cysteine lipid modification. The S-diacylglycerol cysteine moiety is linked to residue C23.

Belongs to the staphylococcal tandem lipoprotein family.

It localises to the cell membrane. This is an uncharacterized protein from Staphylococcus aureus (strain MRSA252).